We begin with the raw amino-acid sequence, 116 residues long: NADPH-dependent 7-cyano-7-deazaguanine reductase (116 aa).

The active-site Thioimide intermediate is the C31. D38 acts as the Proton donor in catalysis. Substrate is bound by residues 53-55 (IEL) and 72-73 (YE).

It belongs to the GTP cyclohydrolase I family. QueF type 1 subfamily.

It is found in the cytoplasm. The catalysed reaction is 7-aminomethyl-7-carbaguanine + 2 NADP(+) = 7-cyano-7-deazaguanine + 2 NADPH + 3 H(+). It participates in tRNA modification; tRNA-queuosine biosynthesis. Functionally, catalyzes the NADPH-dependent reduction of 7-cyano-7-deazaguanine (preQ0) to 7-aminomethyl-7-deazaguanine (preQ1). This Pelodictyon phaeoclathratiforme (strain DSM 5477 / BU-1) protein is NADPH-dependent 7-cyano-7-deazaguanine reductase.